The chain runs to 245 residues: Eukaryotic translation initiation factor 6 (245 aa).

It belongs to the eIF-6 family. In terms of assembly, monomer. Associates with the 60S ribosomal subunit.

It localises to the cytoplasm. The protein localises to the nucleus. Its subcellular location is the nucleolus. Its function is as follows. Binds to the 60S ribosomal subunit and prevents its association with the 40S ribosomal subunit to form the 80S initiation complex in the cytoplasm. May also be involved in ribosome biogenesis. In Xenopus laevis (African clawed frog), this protein is Eukaryotic translation initiation factor 6 (eif6).